A 309-amino-acid polypeptide reads, in one-letter code: Putative glycosyltransferase 48 (309 aa).

It belongs to the glycosyltransferase group 1 family. Glycosyltransferase 4 subfamily.

The protein is Putative glycosyltransferase 48 (SIFV0048) of Saccharolobus islandicus (Sulfolobus islandicus).